The primary structure comprises 210 residues: Cytochrome c biogenesis ATP-binding export protein CcmA (210 aa).

Residues 4–207 (LAVRDLAVAR…RQSRPAGFNE (204 aa)) form the ABC transporter domain. ATP is bound at residue 36–43 (GPNGIGKT).

It belongs to the ABC transporter superfamily. CcmA exporter (TC 3.A.1.107) family. As to quaternary structure, the complex is composed of two ATP-binding proteins (CcmA) and two transmembrane proteins (CcmB).

The protein resides in the cell inner membrane. The catalysed reaction is heme b(in) + ATP + H2O = heme b(out) + ADP + phosphate + H(+). In terms of biological role, part of the ABC transporter complex CcmAB involved in the biogenesis of c-type cytochromes; once thought to export heme, this seems not to be the case, but its exact role is uncertain. Responsible for energy coupling to the transport system. The polypeptide is Cytochrome c biogenesis ATP-binding export protein CcmA (Paracoccus denitrificans (strain Pd 1222)).